The chain runs to 169 residues: tRNA (cytidine(56)-2'-O)-methyltransferase (169 aa).

S-adenosyl-L-methionine contacts are provided by residues Leu77, 103–107, and 121–128; these read GSEKV and IGNQPHSE.

It belongs to the aTrm56 family. As to quaternary structure, homodimer.

It localises to the cytoplasm. It carries out the reaction cytidine(56) in tRNA + S-adenosyl-L-methionine = 2'-O-methylcytidine(56) in tRNA + S-adenosyl-L-homocysteine + H(+). Specifically catalyzes the AdoMet-dependent 2'-O-ribose methylation of cytidine at position 56 in tRNAs. This Sulfurisphaera tokodaii (strain DSM 16993 / JCM 10545 / NBRC 100140 / 7) (Sulfolobus tokodaii) protein is tRNA (cytidine(56)-2'-O)-methyltransferase.